A 166-amino-acid polypeptide reads, in one-letter code: Putative signal peptidase complex catalytic subunit SEC11B (166 aa).

Over 1–6 the chain is Cytoplasmic; the sequence is MNKWRL. A helical; Signal-anchor for type II membrane protein transmembrane segment spans residues 7–24; it reads YYQVLNFGMIVSSALMIW. Residues 25 to 166 lie on the Extracellular side of the membrane; sequence KGLMVITGSE…LGLFVLVHRE (142 aa). The active site involves Ser-43.

It belongs to the peptidase S26B family.

It localises to the membrane. The catalysed reaction is Cleavage of hydrophobic, N-terminal signal or leader sequences from secreted and periplasmic proteins.. In terms of biological role, putative component of some signal peptidase complex which removes signal peptides from nascent proteins as they are translocated into the lumen of the endoplasmic reticulum. This is Putative signal peptidase complex catalytic subunit SEC11B (SEC11B) from Homo sapiens (Human).